Consider the following 358-residue polypeptide: UDP-N-acetylglucosamine--N-acetylmuramyl-(pentapeptide) pyrophosphoryl-undecaprenol N-acetylglucosamine transferase (358 aa).

Residues 13 to 15 (TAG), R166, S196, and Q291 each bind UDP-N-acetyl-alpha-D-glucosamine.

This sequence belongs to the glycosyltransferase 28 family. MurG subfamily.

The protein resides in the cell membrane. The catalysed reaction is di-trans,octa-cis-undecaprenyl diphospho-N-acetyl-alpha-D-muramoyl-L-alanyl-D-glutamyl-meso-2,6-diaminopimeloyl-D-alanyl-D-alanine + UDP-N-acetyl-alpha-D-glucosamine = di-trans,octa-cis-undecaprenyl diphospho-[N-acetyl-alpha-D-glucosaminyl-(1-&gt;4)]-N-acetyl-alpha-D-muramoyl-L-alanyl-D-glutamyl-meso-2,6-diaminopimeloyl-D-alanyl-D-alanine + UDP + H(+). The protein operates within cell wall biogenesis; peptidoglycan biosynthesis. Its function is as follows. Cell wall formation. Catalyzes the transfer of a GlcNAc subunit on undecaprenyl-pyrophosphoryl-MurNAc-pentapeptide (lipid intermediate I) to form undecaprenyl-pyrophosphoryl-MurNAc-(pentapeptide)GlcNAc (lipid intermediate II). This is UDP-N-acetylglucosamine--N-acetylmuramyl-(pentapeptide) pyrophosphoryl-undecaprenol N-acetylglucosamine transferase from Clostridium botulinum (strain Alaska E43 / Type E3).